The sequence spans 270 residues: Formamidopyrimidine-DNA glycosylase (270 aa).

Catalysis depends on P2, which acts as the Schiff-base intermediate with DNA. E3 functions as the Proton donor in the catalytic mechanism. Catalysis depends on K57, which acts as the Proton donor; for beta-elimination activity. DNA is bound by residues H90, R109, and K150. The segment at 235–269 adopts an FPG-type zinc-finger fold; the sequence is LVYGNKDKPCPRCGTKIKSIIIGQRNSFFCPQCQK. R259 serves as the catalytic Proton donor; for delta-elimination activity.

It belongs to the FPG family. Monomer. The cofactor is Zn(2+).

It catalyses the reaction Hydrolysis of DNA containing ring-opened 7-methylguanine residues, releasing 2,6-diamino-4-hydroxy-5-(N-methyl)formamidopyrimidine.. The enzyme catalyses 2'-deoxyribonucleotide-(2'-deoxyribose 5'-phosphate)-2'-deoxyribonucleotide-DNA = a 3'-end 2'-deoxyribonucleotide-(2,3-dehydro-2,3-deoxyribose 5'-phosphate)-DNA + a 5'-end 5'-phospho-2'-deoxyribonucleoside-DNA + H(+). Functionally, involved in base excision repair of DNA damaged by oxidation or by mutagenic agents. Acts as a DNA glycosylase that recognizes and removes damaged bases. Has a preference for oxidized purines, such as 7,8-dihydro-8-oxoguanine (8-oxoG). Has AP (apurinic/apyrimidinic) lyase activity and introduces nicks in the DNA strand. Cleaves the DNA backbone by beta-delta elimination to generate a single-strand break at the site of the removed base with both 3'- and 5'-phosphates. This Histophilus somni (strain 129Pt) (Haemophilus somnus) protein is Formamidopyrimidine-DNA glycosylase.